The chain runs to 192 residues: Adenylate kinase (192 aa).

Residue 10-18 (GVPGVGSTT) coordinates ATP.

This sequence belongs to the archaeal adenylate kinase family. Monomer.

It is found in the cytoplasm. It catalyses the reaction AMP + ATP = 2 ADP. The protein is Adenylate kinase (adkA) of Methanocaldococcus jannaschii (strain ATCC 43067 / DSM 2661 / JAL-1 / JCM 10045 / NBRC 100440) (Methanococcus jannaschii).